The sequence spans 339 residues: Heat stress transcription factor C-1a (339 aa).

Positions 154-217 (EEEDAAEDVL…LAKLADDPNA (64 aa)) form a coiled coil. The interval 176–212 (LRHEQTAIGEELARMSQRLQATERRPDQLMSFLAKLA) is hydrophobic repeat HR-A/B. A disordered region spans residues 227–248 (AERKRRRQHLPSHEPTVCPLPP). The short motif at 229-233 (RKRRR) is the Nuclear localization signal element.

It belongs to the HSF family. Class C subfamily. Homotrimer. In terms of processing, exhibits temperature-dependent phosphorylation.

The protein resides in the nucleus. Its function is as follows. Transcriptional regulator that specifically binds DNA of heat shock promoter elements (HSE). In Oryza sativa subsp. japonica (Rice), this protein is Heat stress transcription factor C-1a (HSFC1A).